Reading from the N-terminus, the 123-residue chain is Dormancy-associated protein homolog 4 (123 aa).

The disordered stretch occupies residues 7–86 (LWDETVAGPT…NPGTPLTPGT (80 aa)). Residues 30–46 (LSTVRSSPPSLSSDQVT) are compositionally biased toward low complexity. 2 stretches are compositionally biased toward polar residues: residues 47-58 (RSIMVTKGNNNV) and 71-80 (PTCSSSNPGT). At Ser74 the chain carries Phosphoserine.

Belongs to the DRM1/ARP family.

This Arabidopsis thaliana (Mouse-ear cress) protein is Dormancy-associated protein homolog 4.